The following is a 491-amino-acid chain: Transmembrane protein 39B (491 aa).

The disordered stretch occupies residues 1–56 (MAGGRRGANRTTYCRSPLSNDTGSVGNGNHSTSSPVTGVRSRTRNGSGTGMSSPPL). N-linked (GlcNAc...) asparagine glycans are attached at residues Asn9, Asn20, Asn29, and Asn45. 2 stretches are compositionally biased toward polar residues: residues 9 to 36 (NRTT…SSPV) and 44 to 56 (RNGS…SPPL). The next 8 membrane-spanning stretches (helical) occupy residues 79–99 (LFEL…YVNI), 115–135 (TSLN…IVLA), 152–172 (LSFP…TLAG), 185–205 (TYSV…IPFF), 290–310 (EVLV…VWFV), 322–342 (CELF…HLLP), 423–443 (ILNI…YSLM), and 449–469 (HQTI…FKLL).

The protein belongs to the TMEM39 family. Expressed in the ovary, followed by the intestine and brain.

It localises to the endoplasmic reticulum membrane. In terms of biological role, may protect the cells against DNA damage caused by exposure to the cold-warming stress and facilitates tissue damage repair during the recovery phase. The chain is Transmembrane protein 39B from Danio rerio (Zebrafish).